A 381-amino-acid polypeptide reads, in one-letter code: Early boundary activity protein 2 (381 aa).

Positions N210–K245 are disordered. Positions P268–Y365 constitute a BEN domain.

As to quaternary structure, the heterotrimeric Elba complex consists of Elba1, Elba2 and Elba3.

It localises to the nucleus. Functionally, the heterotrimeric Elba complex is required for chromatin domain boundary function during early embryogenesis. It binds to a 8-bp sequence 5'-CCAATAAG-3' in the Fab-7 insulator or boundary element in the bithorax complex and contributes to its insulator or boundary activity. Elba2 can act as a transcriptional repressor and binds the palindromic sequence 5'-CCAATTGG-3' to mediate transcriptional repression. This chain is Early boundary activity protein 2, found in Drosophila melanogaster (Fruit fly).